We begin with the raw amino-acid sequence, 382 residues long: MLRWTVHLEGGPRRVNHAAVAVGHRVYSFGGYCSGEDYETLRQIDVHIFNAVSLRWTKLPPVRPAVRGQAPVVPYMRYGHSTVLIDDTVFLWGGRNDTEGACNVLYAFDVNTHKWSTPRVSGTVPGARDGHSACVLGKIMYIFGGYEQLADCFSNDIHKLDTSTMTWTLVCTKGNPARWRDFHSATMLGNHMYVFGGRADRFGPFHSNNEIYCNRIRVFDTRTEAWLDCPHTPVLPEGRRSHSAFGYNGELYIFGGYNARLNRHFHDLWKFNPGSFTWKKIEPKGKGPCPRRRQCCCIVGDKIVLFGGTSPSPEEGLGDEFDLIDHSDLHILDFSPSLKTLCKLAVIQYSLDQSCLPHDIRWELNAMTTNSNISRPIVSSHG.

Kelch repeat units follow at residues 25–77 (RVYS…PYMR), 88–138 (TVFL…VLGK), 139–189 (IMYI…TMLG), 191–249 (HMYV…GYNG), and 251–301 (LYIF…IVGD).

Component of a CRL2(KLHDC3) complex, also named ECS(KLHDC3) complex, composed of CUL2, Elongin BC (ELOB and ELOC), RBX1 and substrate-specific adapter KLHDC3. May form oligomers as a KLHDC3-ELOB-ELOC complex; this interaction is likely autoinhibitory for the E3 ligase complex. In terms of tissue distribution, expressed specifically in testis, particularly in pachytene spermatocytes.

It localises to the cytoplasm. It functions in the pathway protein modification; protein ubiquitination. Functionally, substrate-recognition component of a Cul2-RING (CRL2) E3 ubiquitin-protein ligase complex of the DesCEND (destruction via C-end degrons) pathway, which recognizes a C-degron located at the extreme C terminus of target proteins, leading to their ubiquitination and degradation. The C-degron recognized by the DesCEND pathway is usually a motif of less than ten residues and can be present in full-length proteins, truncated proteins or proteolytically cleaved forms. The CRL2(KLHDC3) complex specifically recognizes proteins with a glycine (Gly) at the C-terminus, leading to their ubiquitination and degradation: recognizes the C-terminal -Arg-(Xaa)n-Arg-Gly, -Arg-(Xaa)n-Lys-Gly, and -Arg-(Xaa)n-Gln-Gly degrons. The CRL2(KLHDC3) complex mediates ubiquitination and degradation of truncated SELENOV and SEPHS2 selenoproteins produced by failed UGA/Sec decoding, which end with a glycine. May be involved in meiotic recombination process. This Mus musculus (Mouse) protein is Kelch domain-containing protein 3.